Reading from the N-terminus, the 353-residue chain is MAFRIASSPYTHNRRSTSRIMLLVLIATLPGIAAQWYYFGWGNIIQVLIASVAALVAEAAILHLRKQPLAETLKDNSALLTALLLGVSIPSLAPWWMVTIGTVFAIIISKQLYGGLGQNPFNPAMVGYVVLVISFPVQMTSWLPPVGLQGITPSFADTLSMIFHLHTLDGHTMQQLQVGIDGISQATPLDHFKTGLRAGHSAEQLLAQPTYSGVIAGIGWQWVNVGFLLGGVFLLFTRCIRWHIPVSFIASLAFFATLGWLLSPQSLVTPMIHLFSGATMLGAFFIATDPVTASTTNKGRLLYGVLIGLLTWLIRSYGGYPDGLAFAVLLANICVPLIDYYTQPRVYGHRKGK.

The next 4 helical transmembrane spans lie at 20–40 (IMLLVLIATLPGIAAQWYYFG), 44–64 (IIQVLIASVAALVAEAAILHL), 77–108 (SALLTALLLGVSIPSLAPWWMVTIGTVFAIII), and 123–143 (PAMVGYVVLVISFPVQMTSWL). An FMN phosphoryl threonine modification is found at threonine 187. 4 consecutive transmembrane segments (helical) span residues 214–234 (VIAGIGWQWVNVGFLLGGVFL), 242–262 (WHIPVSFIASLAFFATLGWLL), 267–287 (LVTPMIHLFSGATMLGAFFIA), and 301–318 (LLYGVLIGLLTWLIRSYG).

It belongs to the NqrB/RnfD family. As to quaternary structure, the complex is composed of six subunits: RnfA, RnfB, RnfC, RnfD, RnfE and RnfG. The cofactor is FMN.

The protein localises to the cell inner membrane. Functionally, part of a membrane-bound complex that couples electron transfer with translocation of ions across the membrane. This Erwinia tasmaniensis (strain DSM 17950 / CFBP 7177 / CIP 109463 / NCPPB 4357 / Et1/99) protein is Ion-translocating oxidoreductase complex subunit D.